The chain runs to 272 residues: Formamidopyrimidine-DNA glycosylase (272 aa).

The active-site Schiff-base intermediate with DNA is proline 2. The Proton donor role is filled by glutamate 3. Residue lysine 57 is the Proton donor; for beta-elimination activity of the active site. DNA is bound by residues histidine 90, arginine 109, and lysine 150. The FPG-type zinc-finger motif lies at 235–269 (HVYGRAKKKCLLCSSIIQEEKIGQRNTFWCGHCQP). The Proton donor; for delta-elimination activity role is filled by arginine 259.

It belongs to the FPG family. In terms of assembly, monomer. It depends on Zn(2+) as a cofactor.

It carries out the reaction Hydrolysis of DNA containing ring-opened 7-methylguanine residues, releasing 2,6-diamino-4-hydroxy-5-(N-methyl)formamidopyrimidine.. The catalysed reaction is 2'-deoxyribonucleotide-(2'-deoxyribose 5'-phosphate)-2'-deoxyribonucleotide-DNA = a 3'-end 2'-deoxyribonucleotide-(2,3-dehydro-2,3-deoxyribose 5'-phosphate)-DNA + a 5'-end 5'-phospho-2'-deoxyribonucleoside-DNA + H(+). Functionally, involved in base excision repair of DNA damaged by oxidation or by mutagenic agents. Acts as a DNA glycosylase that recognizes and removes damaged bases. Has a preference for oxidized purines, such as 7,8-dihydro-8-oxoguanine (8-oxoG). Has AP (apurinic/apyrimidinic) lyase activity and introduces nicks in the DNA strand. Cleaves the DNA backbone by beta-delta elimination to generate a single-strand break at the site of the removed base with both 3'- and 5'-phosphates. The chain is Formamidopyrimidine-DNA glycosylase from Aliivibrio fischeri (strain ATCC 700601 / ES114) (Vibrio fischeri).